Reading from the N-terminus, the 365-residue chain is tRNA-specific 2-thiouridylase MnmA (365 aa).

ATP-binding positions include 9 to 16 (AMSGGVDS) and M35. C105 functions as the Nucleophile in the catalytic mechanism. An intrachain disulfide couples C105 to C203. An ATP-binding site is contributed by G129. Residues 153–155 (KDQ) form an interaction with tRNA region. C203 functions as the Cysteine persulfide intermediate in the catalytic mechanism. Residues 308-309 (RY) form an interaction with tRNA region.

It belongs to the MnmA/TRMU family.

The protein resides in the cytoplasm. It carries out the reaction S-sulfanyl-L-cysteinyl-[protein] + uridine(34) in tRNA + AH2 + ATP = 2-thiouridine(34) in tRNA + L-cysteinyl-[protein] + A + AMP + diphosphate + H(+). In terms of biological role, catalyzes the 2-thiolation of uridine at the wobble position (U34) of tRNA, leading to the formation of s(2)U34. The protein is tRNA-specific 2-thiouridylase MnmA of Pelotomaculum thermopropionicum (strain DSM 13744 / JCM 10971 / SI).